Reading from the N-terminus, the 93-residue chain is MEMPRRFNSYCPNCDEHHQLEAEKVRSGRSSGMKWDARRTKRANASIGNHGRFSKVPVGNKPTNRTDLKYRCSECGNAHLREGWRAGRLVLQE.

Zn(2+) is bound by residues C11 and C14. A C4-type zinc finger spans residues 11–75 (CPNCDEHHQL…TDLKYRCSEC (65 aa)). The tract at residues 24-62 (KVRSGRSSGMKWDARRTKRANASIGNHGRFSKVPVGNKP) is disordered. 2 residues coordinate Zn(2+): C72 and C75.

It belongs to the eukaryotic ribosomal protein eL42 family. In terms of assembly, part of the 50S ribosomal subunit. It depends on Zn(2+) as a cofactor.

Its function is as follows. Binds to the 23S rRNA. The polypeptide is Large ribosomal subunit protein eL42 (Halobacterium salinarum (strain ATCC 700922 / JCM 11081 / NRC-1) (Halobacterium halobium)).